Reading from the N-terminus, the 362-residue chain is Protein-glutamate methylesterase/protein-glutamine glutaminase (362 aa).

One can recognise a Response regulatory domain in the interval 10–127; it reads RVLVVDDSAF…SLNMHVARDE (118 aa). Position 61 is a 4-aspartylphosphate (Asp61). The region spanning 173–362 is the CheB-type methylesterase domain; it reads RLPRRLVLIG…DAITRAVGEG (190 aa). Active-site residues include Ser184, His211, and Asp304.

It belongs to the CheB family. Phosphorylated by CheA. Phosphorylation of the N-terminal regulatory domain activates the methylesterase activity.

Its subcellular location is the cytoplasm. It catalyses the reaction [protein]-L-glutamate 5-O-methyl ester + H2O = L-glutamyl-[protein] + methanol + H(+). The enzyme catalyses L-glutaminyl-[protein] + H2O = L-glutamyl-[protein] + NH4(+). Functionally, involved in chemotaxis. Part of a chemotaxis signal transduction system that modulates chemotaxis in response to various stimuli. Catalyzes the demethylation of specific methylglutamate residues introduced into the chemoreceptors (methyl-accepting chemotaxis proteins or MCP) by CheR. Also mediates the irreversible deamidation of specific glutamine residues to glutamic acid. This Symbiobacterium thermophilum (strain DSM 24528 / JCM 14929 / IAM 14863 / T) protein is Protein-glutamate methylesterase/protein-glutamine glutaminase.